Here is a 408-residue protein sequence, read N- to C-terminus: Acetate kinase (408 aa).

Residue Asn7 coordinates Mg(2+). Position 14 (Lys14) interacts with ATP. Substrate is bound at residue Arg91. Asp148 functions as the Proton donor/acceptor in the catalytic mechanism. ATP contacts are provided by residues 208–212 (HLGNG), 283–285 (DFR), and 331–335 (GIGEN). Glu384 serves as a coordination point for Mg(2+).

This sequence belongs to the acetokinase family. Homodimer. Mg(2+) is required as a cofactor. The cofactor is Mn(2+).

The protein localises to the cytoplasm. It carries out the reaction acetate + ATP = acetyl phosphate + ADP. Its pathway is metabolic intermediate biosynthesis; acetyl-CoA biosynthesis; acetyl-CoA from acetate: step 1/2. In terms of biological role, catalyzes the formation of acetyl phosphate from acetate and ATP. Can also catalyze the reverse reaction. This Methanosarcina mazei (strain ATCC BAA-159 / DSM 3647 / Goe1 / Go1 / JCM 11833 / OCM 88) (Methanosarcina frisia) protein is Acetate kinase.